Reading from the N-terminus, the 669-residue chain is DNA ligase (669 aa).

Residues 34 to 38 (DAEYD), 83 to 84 (SL), and Glu-114 contribute to the NAD(+) site. Lys-116 functions as the N6-AMP-lysine intermediate in the catalytic mechanism. 4 residues coordinate NAD(+): Arg-137, Glu-171, Lys-287, and Lys-311. Zn(2+) is bound by residues Cys-405, Cys-408, Cys-423, and Cys-428. The BRCT domain maps to 591–669 (NVESYFAGKT…EERFLQELNK (79 aa)).

Belongs to the NAD-dependent DNA ligase family. LigA subfamily. Requires Mg(2+) as cofactor. It depends on Mn(2+) as a cofactor.

The catalysed reaction is NAD(+) + (deoxyribonucleotide)n-3'-hydroxyl + 5'-phospho-(deoxyribonucleotide)m = (deoxyribonucleotide)n+m + AMP + beta-nicotinamide D-nucleotide.. Its function is as follows. DNA ligase that catalyzes the formation of phosphodiester linkages between 5'-phosphoryl and 3'-hydroxyl groups in double-stranded DNA using NAD as a coenzyme and as the energy source for the reaction. It is essential for DNA replication and repair of damaged DNA. This chain is DNA ligase, found in Bacillus cereus (strain B4264).